We begin with the raw amino-acid sequence, 575 residues long: MRQSIEELMEHAQNTLLAEGVIPADAKLGGIKVERPKDKSHGDFSINTAMVLAKQARMKPRDLAQRLVDALPSGQGVVSRCEIAGPGFINFFVTPERLRGVVADVLQRGGSYGQGNVGAGQKVLVEFVSANPTGPMHVGHGRGAVTGDVLARILECAGYAVQREYYLNDAGVQVQVLGRSVMLRYRQLFGDAVEVAEGCYPGDYVVDIARALKEKDQDKWLEVARAEPDEYPREMLEFAMQQVLTWIKADLARLNIRFDHWFSEFSLHSEGRIEHALEVLSQKGCLYEGVLEPPKGKKSEAWASRPQLLFKATDFGDEVDRALRKSDGSYTYFAADVAYHLNKAERGFERLVNIWGADHGGYVRRVQAALGALTGKQNLLDVVLIQMVNLTRGGEPVKMSKRAGTFVTLEEVVEATSSDAVRFWFLSRGSGAQLDFDLDLAVAKNNDNPVYYVQYAHARICSIWDKAQHEGVALQAQGWSGVDLSPLGEGAEWDLIRKLDLFPDVVEGAAVHQEPHRIPYYLLDLAAAFHTFYNSHRIMDVDAGTRDARLVLILAVKQVIANGLELLGVQQPRSM.

The 'HIGH' region motif lies at 130–140; sequence ANPTGPMHVGH.

The protein belongs to the class-I aminoacyl-tRNA synthetase family. In terms of assembly, monomer.

Its subcellular location is the cytoplasm. It carries out the reaction tRNA(Arg) + L-arginine + ATP = L-arginyl-tRNA(Arg) + AMP + diphosphate. This is Arginine--tRNA ligase from Magnetococcus marinus (strain ATCC BAA-1437 / JCM 17883 / MC-1).